The sequence spans 150 residues: Large ribosomal subunit protein uL13 (150 aa).

The interval 129–150 (PEHPHSAQRPQTLQLNPAASSQ) is disordered. Residues 136–150 (QRPQTLQLNPAASSQ) show a composition bias toward polar residues.

The protein belongs to the universal ribosomal protein uL13 family. Part of the 50S ribosomal subunit.

Functionally, this protein is one of the early assembly proteins of the 50S ribosomal subunit, although it is not seen to bind rRNA by itself. It is important during the early stages of 50S assembly. In Prochlorococcus marinus (strain MIT 9303), this protein is Large ribosomal subunit protein uL13.